The primary structure comprises 332 residues: Probable cation efflux system protein MT2084 (332 aa).

5 helical membrane passes run 46–66 (ISLL…VMSG), 75–95 (IHNF…ALGA), 113–133 (AGSF…YEAI), 145–165 (VGWV…VALY), and 202–222 (VALG…AAIL).

Belongs to the cation diffusion facilitator (CDF) transporter (TC 2.A.4) family.

The protein localises to the cell membrane. This chain is Probable cation efflux system protein MT2084, found in Mycobacterium tuberculosis (strain CDC 1551 / Oshkosh).